The following is a 280-amino-acid chain: Energy-coupling factor transporter ATP-binding protein EcfA2 (280 aa).

An ABC transporter domain is found at 3–245; sequence INLQNVSYTY…VSLLEKKQLG (243 aa). 40–47 is an ATP binding site; sequence GHTGSGKS.

The protein belongs to the ABC transporter superfamily. Energy-coupling factor EcfA family. Forms a stable energy-coupling factor (ECF) transporter complex composed of 2 membrane-embedded substrate-binding proteins (S component), 2 ATP-binding proteins (A component) and 2 transmembrane proteins (T component).

Its subcellular location is the cell membrane. ATP-binding (A) component of a common energy-coupling factor (ECF) ABC-transporter complex. Unlike classic ABC transporters this ECF transporter provides the energy necessary to transport a number of different substrates. This is Energy-coupling factor transporter ATP-binding protein EcfA2 from Streptococcus pyogenes serotype M1.